Here is a 451-residue protein sequence, read N- to C-terminus: Bifunctional protein GlmU (451 aa).

The pyrophosphorylase stretch occupies residues 1–230 (MNNPIAAIVL…PADVGGINSR (230 aa)). UDP-N-acetyl-alpha-D-glucosamine is bound by residues 10-13 (LAAG), K24, Q74, 79-80 (GT), 102-104 (YGD), G142, E156, N171, and N228. Residue D104 coordinates Mg(2+). Mg(2+) is bound at residue N228. The linker stretch occupies residues 231 to 251 (AELAAAEAQWQAFRREEAMAA). The interval 252-451 (GASLRAPETV…RKKKAAEQKK (200 aa)) is N-acetyltransferase. R317 and K335 together coordinate UDP-N-acetyl-alpha-D-glucosamine. The Proton acceptor role is filled by H347. The UDP-N-acetyl-alpha-D-glucosamine site is built by Y350 and N361. Acetyl-CoA contacts are provided by residues A364, 370-371 (NY), S389, A407, and R424.

It in the N-terminal section; belongs to the N-acetylglucosamine-1-phosphate uridyltransferase family. This sequence in the C-terminal section; belongs to the transferase hexapeptide repeat family. As to quaternary structure, homotrimer. Mg(2+) is required as a cofactor.

It is found in the cytoplasm. The enzyme catalyses alpha-D-glucosamine 1-phosphate + acetyl-CoA = N-acetyl-alpha-D-glucosamine 1-phosphate + CoA + H(+). It catalyses the reaction N-acetyl-alpha-D-glucosamine 1-phosphate + UTP + H(+) = UDP-N-acetyl-alpha-D-glucosamine + diphosphate. It functions in the pathway nucleotide-sugar biosynthesis; UDP-N-acetyl-alpha-D-glucosamine biosynthesis; N-acetyl-alpha-D-glucosamine 1-phosphate from alpha-D-glucosamine 6-phosphate (route II): step 2/2. Its pathway is nucleotide-sugar biosynthesis; UDP-N-acetyl-alpha-D-glucosamine biosynthesis; UDP-N-acetyl-alpha-D-glucosamine from N-acetyl-alpha-D-glucosamine 1-phosphate: step 1/1. The protein operates within bacterial outer membrane biogenesis; LPS lipid A biosynthesis. Its function is as follows. Catalyzes the last two sequential reactions in the de novo biosynthetic pathway for UDP-N-acetylglucosamine (UDP-GlcNAc). The C-terminal domain catalyzes the transfer of acetyl group from acetyl coenzyme A to glucosamine-1-phosphate (GlcN-1-P) to produce N-acetylglucosamine-1-phosphate (GlcNAc-1-P), which is converted into UDP-GlcNAc by the transfer of uridine 5-monophosphate (from uridine 5-triphosphate), a reaction catalyzed by the N-terminal domain. The protein is Bifunctional protein GlmU of Sphingopyxis alaskensis (strain DSM 13593 / LMG 18877 / RB2256) (Sphingomonas alaskensis).